The following is a 767-amino-acid chain: AMP deaminase 3 (767 aa).

Phosphoserine is present on residues serine 85 and serine 107. Disordered regions lie at residues 89–111 (QMPP…PTTP) and 181–205 (LGHP…PLPQ). Residues histidine 317 and histidine 319 each coordinate Zn(2+). Residues histidine 319 and 388–393 (KFNSKY) contribute to the substrate site. A Zn(2+)-binding site is contributed by histidine 586. Glutamate 589 lines the substrate pocket. The active-site Proton acceptor is the histidine 608. Residue aspartate 663 participates in Zn(2+) binding. Residue 664 to 667 (DPMQ) participates in substrate binding.

Belongs to the metallo-dependent hydrolases superfamily. Adenosine and AMP deaminases family. Homotetramer. It depends on Zn(2+) as a cofactor.

The enzyme catalyses AMP + H2O + H(+) = IMP + NH4(+). Its pathway is purine metabolism; IMP biosynthesis via salvage pathway; IMP from AMP: step 1/1. In terms of biological role, AMP deaminase plays a critical role in energy metabolism. The chain is AMP deaminase 3 from Homo sapiens (Human).